A 240-amino-acid chain; its full sequence is 2,3-bisphosphoglycerate-dependent phosphoglycerate mutase 2 (240 aa).

Substrate is bound by residues 8–15 (RHGQSEWN), 21–22 (TG), arginine 60, 87–90 (ERHY), lysine 98, 114–115 (RR), and 183–184 (GN). The active-site Tele-phosphohistidine intermediate is the histidine 9. Glutamate 87 serves as the catalytic Proton donor/acceptor.

It belongs to the phosphoglycerate mutase family. BPG-dependent PGAM subfamily.

The enzyme catalyses (2R)-2-phosphoglycerate = (2R)-3-phosphoglycerate. It participates in carbohydrate degradation; glycolysis; pyruvate from D-glyceraldehyde 3-phosphate: step 3/5. Catalyzes the interconversion of 2-phosphoglycerate and 3-phosphoglycerate. The protein is 2,3-bisphosphoglycerate-dependent phosphoglycerate mutase 2 of Bacillus cereus (strain ATCC 10987 / NRS 248).